Here is a 388-residue protein sequence, read N- to C-terminus: MKVHEHQAKEIFARYGLPVPKGYPAFTVEEAVEAAQQLGKFPVVVKAQIHAGGRGKAGGVKLANNLDEVQKYAAELLGKTLVTFQTGPEGLPVSRIYIEEGTNIDKEFYVAITLDRSKSKLIIMASSEGGMEIEEVAAKNPEAIITEVIDPFLGLRPYQAREIALKLGLPKNLLNKAAGLFVKLYELYMKEDASMVEINPLVLTKEGNIVILDAKVDFDDNALFRHPDIMEMEDPTQESELEVKAKQYNLNYIKLDGNIACMVNGAGLAMATMDTIKLAGGEPANFLDVGGSANAEQIANAFKIILSDPNVKAIFINIFGGILRCDRLAEGIIQASKEVNPHVPIIVRMEGTNVELGKKMLAESGLDLIPADTMWEGAKKAVELASKA.

Residues 9-244 enclose the ATP-grasp domain; it reads KEIFARYGLP…PTQESELEVK (236 aa). ATP-binding positions include K46, 53-55, E99, T102, and E107; that span reads GRG. 2 residues coordinate Mg(2+): N199 and D213. Residues N264 and 321-323 each bind substrate; that span reads GIL.

It belongs to the succinate/malate CoA ligase beta subunit family. Heterotetramer of two alpha and two beta subunits. It depends on Mg(2+) as a cofactor.

It carries out the reaction succinate + ATP + CoA = succinyl-CoA + ADP + phosphate. The enzyme catalyses GTP + succinate + CoA = succinyl-CoA + GDP + phosphate. Its pathway is carbohydrate metabolism; tricarboxylic acid cycle; succinate from succinyl-CoA (ligase route): step 1/1. Succinyl-CoA synthetase functions in the citric acid cycle (TCA), coupling the hydrolysis of succinyl-CoA to the synthesis of either ATP or GTP and thus represents the only step of substrate-level phosphorylation in the TCA. The beta subunit provides nucleotide specificity of the enzyme and binds the substrate succinate, while the binding sites for coenzyme A and phosphate are found in the alpha subunit. The chain is Succinate--CoA ligase [ADP-forming] subunit beta from Persephonella marina (strain DSM 14350 / EX-H1).